The chain runs to 408 residues: Dual-specificity RNA methyltransferase RlmN (408 aa).

E126 (proton acceptor) is an active-site residue. The 242-residue stretch at 132–373 (EEGRGTLCLS…NQAGYASPIR (242 aa)) folds into the Radical SAM core domain. A disulfide bond links C139 and C384. The [4Fe-4S] cluster site is built by C146, C150, and C153. S-adenosyl-L-methionine-binding positions include 210–211 (GE), S242, 264–266 (SLH), and N341. The S-methylcysteine intermediate role is filled by C384.

The protein belongs to the radical SAM superfamily. RlmN family. The cofactor is [4Fe-4S] cluster.

Its subcellular location is the cytoplasm. It carries out the reaction adenosine(2503) in 23S rRNA + 2 reduced [2Fe-2S]-[ferredoxin] + 2 S-adenosyl-L-methionine = 2-methyladenosine(2503) in 23S rRNA + 5'-deoxyadenosine + L-methionine + 2 oxidized [2Fe-2S]-[ferredoxin] + S-adenosyl-L-homocysteine. It catalyses the reaction adenosine(37) in tRNA + 2 reduced [2Fe-2S]-[ferredoxin] + 2 S-adenosyl-L-methionine = 2-methyladenosine(37) in tRNA + 5'-deoxyadenosine + L-methionine + 2 oxidized [2Fe-2S]-[ferredoxin] + S-adenosyl-L-homocysteine. In terms of biological role, specifically methylates position 2 of adenine 2503 in 23S rRNA and position 2 of adenine 37 in tRNAs. m2A2503 modification seems to play a crucial role in the proofreading step occurring at the peptidyl transferase center and thus would serve to optimize ribosomal fidelity. This Bartonella tribocorum (strain CIP 105476 / IBS 506) protein is Dual-specificity RNA methyltransferase RlmN.